We begin with the raw amino-acid sequence, 72 residues long: Translation initiation factor IF-1 (72 aa).

The 72-residue stretch at methionine 1–arginine 72 folds into the S1-like domain.

Belongs to the IF-1 family. Component of the 30S ribosomal translation pre-initiation complex which assembles on the 30S ribosome in the order IF-2 and IF-3, IF-1 and N-formylmethionyl-tRNA(fMet); mRNA recruitment can occur at any time during PIC assembly.

The protein localises to the cytoplasm. Its function is as follows. One of the essential components for the initiation of protein synthesis. Stabilizes the binding of IF-2 and IF-3 on the 30S subunit to which N-formylmethionyl-tRNA(fMet) subsequently binds. Helps modulate mRNA selection, yielding the 30S pre-initiation complex (PIC). Upon addition of the 50S ribosomal subunit IF-1, IF-2 and IF-3 are released leaving the mature 70S translation initiation complex. The polypeptide is Translation initiation factor IF-1 (Hahella chejuensis (strain KCTC 2396)).